Consider the following 191-residue polypeptide: GTP cyclohydrolase 1 (191 aa).

Zn(2+)-binding residues include C80, H83, and C151.

The protein belongs to the GTP cyclohydrolase I family. In terms of assembly, toroid-shaped homodecamer, composed of two pentamers of five dimers.

It catalyses the reaction GTP + H2O = 7,8-dihydroneopterin 3'-triphosphate + formate + H(+). The protein operates within cofactor biosynthesis; 7,8-dihydroneopterin triphosphate biosynthesis; 7,8-dihydroneopterin triphosphate from GTP: step 1/1. The sequence is that of GTP cyclohydrolase 1 from Leifsonia xyli subsp. xyli (strain CTCB07).